The following is a 333-amino-acid chain: Autoinducer 2 import system permease protein LsrD (333 aa).

Helical transmembrane passes span 7–27 (YGWE…FGIA), 45–65 (ICIG…GIDI), 70–90 (TIGL…PMAA), 91–111 (AIPL…ALIL), 119–139 (VITL…SGIF), 162–182 (LLGL…FWLF), 212–232 (TLYF…IVLV), 240–260 (SDLG…GGAN), 261–281 (IYGG…IGYL), and 288–308 (IGIP…IAVV).

It belongs to the binding-protein-dependent transport system permease family. AraH/RbsC subfamily. The complex is composed of two ATP-binding proteins (LsrA), two transmembrane proteins (LsrC and LsrD) and a solute-binding protein (LsrB).

The protein resides in the cell inner membrane. In terms of biological role, part of the ABC transporter complex LsrABCD involved in autoinducer 2 (AI-2) import. Probably responsible for the translocation of the substrate across the membrane. This Photorhabdus temperata protein is Autoinducer 2 import system permease protein LsrD (lsrD).